A 248-amino-acid polypeptide reads, in one-letter code: tRNA (guanine-N(1)-)-methyltransferase (248 aa).

S-adenosyl-L-methionine-binding positions include G113 and 133 to 138; that span reads IGDYVL.

The protein belongs to the RNA methyltransferase TrmD family. Homodimer.

Its subcellular location is the cytoplasm. The enzyme catalyses guanosine(37) in tRNA + S-adenosyl-L-methionine = N(1)-methylguanosine(37) in tRNA + S-adenosyl-L-homocysteine + H(+). Its function is as follows. Specifically methylates guanosine-37 in various tRNAs. In Shewanella baltica (strain OS223), this protein is tRNA (guanine-N(1)-)-methyltransferase.